The following is a 514-amino-acid chain: 2,3-bisphosphoglycerate-independent phosphoglycerate mutase (514 aa).

Mn(2+)-binding residues include D14 and S64. The active-site Phosphoserine intermediate is the S64. Substrate is bound by residues H125, 155–156 (RD), R187, R193, 263–266 (RADR), and K336. D403, H407, D444, H445, and H463 together coordinate Mn(2+).

It belongs to the BPG-independent phosphoglycerate mutase family. As to quaternary structure, monomer. The cofactor is Mn(2+).

It catalyses the reaction (2R)-2-phosphoglycerate = (2R)-3-phosphoglycerate. Its pathway is carbohydrate degradation; glycolysis; pyruvate from D-glyceraldehyde 3-phosphate: step 3/5. Catalyzes the interconversion of 2-phosphoglycerate and 3-phosphoglycerate. This Shigella flexneri protein is 2,3-bisphosphoglycerate-independent phosphoglycerate mutase.